Consider the following 73-residue polypeptide: Mu-conotoxin PIIIA (73 aa).

The signal sequence occupies residues 1 to 19 (MSKLGVLLTICLLLFPITA). Positions 20–49 (LPMDGDQPADRLAERMQDNISSEEHPFEKR) are excised as a propeptide. The residue at position 50 (glutamine 50) is a Pyrrolidone carboxylic acid. Cystine bridges form between cysteine 53–cysteine 65, cysteine 53–cysteine 70, cysteine 54–cysteine 70, cysteine 54–cysteine 71, cysteine 60–cysteine 65, and cysteine 60–cysteine 71. The residue at position 57 (proline 57) is a 4-hydroxyproline. The residue at position 67 (proline 67) is a 4-hydroxyproline. Cysteine 71 carries the cysteine amide modification.

It belongs to the conotoxin M superfamily. Post-translationally, 3D-structure of 3 disulfide-bond connectivities isomers is described (PIIIA-1 (C1-C5, C2-C6, C3-C4), PIIIA-2 (C1-C4, C2-C5, C3-C6) and PIIIA-3 (C1-C2, C3-C4, C5-C6)). Only PIIIA-2 contains the cysteine connectivity described as typical for native mu-conotoxins. However, PIIIA-1 is more potent than PIIIA-2, suggesting another possible disulfid connectivity. For this reason, both connectivities have been indicated in features. Expressed by the venom duct.

It localises to the secreted. Its function is as follows. Mu-conotoxins block voltage-gated sodium channels (Nav). This toxin potently blocks rNav1.4/SCN4A (IC(50)=36-41 nM). It also moderately blocks rNav1.1/SCN1A (IC(50)=120 nM), rNav1.2/SCN2A (IC(50)=620 nM), rNav1.3/SCN3A (IC(50)=3.2 uM), mNav1.6/SCN8A (IC(50)=100 nM). This inhibition is reversible. The block of Nav1.1, Nav1.2, and Nav1.6 is modified when beta-subunits are coexpressed with alpha subunits. Hence, blocks of channels containing the beta-1 and beta-3 subunits are more potent (compared to channels without beta subunits), whereas blocks of channels containing the beta-2 and beta-4 are less potent (compared to channels without beta subunits). In vivo, this peptide causes flaccid paralysis in both mice and fish. The sequence is that of Mu-conotoxin PIIIA from Conus purpurascens (Purple cone).